Here is a 319-residue protein sequence, read N- to C-terminus: tRNA-cytidine(32) 2-sulfurtransferase (319 aa).

A PP-loop motif motif is present at residues 49–54; the sequence is SGGKDS. [4Fe-4S] cluster contacts are provided by cysteine 124, cysteine 127, and cysteine 215.

Belongs to the TtcA family. As to quaternary structure, homodimer. Requires Mg(2+) as cofactor. [4Fe-4S] cluster is required as a cofactor.

Its subcellular location is the cytoplasm. It catalyses the reaction cytidine(32) in tRNA + S-sulfanyl-L-cysteinyl-[cysteine desulfurase] + AH2 + ATP = 2-thiocytidine(32) in tRNA + L-cysteinyl-[cysteine desulfurase] + A + AMP + diphosphate + H(+). It functions in the pathway tRNA modification. Catalyzes the ATP-dependent 2-thiolation of cytidine in position 32 of tRNA, to form 2-thiocytidine (s(2)C32). The sulfur atoms are provided by the cysteine/cysteine desulfurase (IscS) system. This chain is tRNA-cytidine(32) 2-sulfurtransferase, found in Shewanella amazonensis (strain ATCC BAA-1098 / SB2B).